Here is a 448-residue protein sequence, read N- to C-terminus: Probable glycine dehydrogenase (decarboxylating) subunit 1 (448 aa).

The protein belongs to the GcvP family. N-terminal subunit subfamily. In terms of assembly, the glycine cleavage system is composed of four proteins: P, T, L and H. In this organism, the P 'protein' is a heterodimer of two subunits.

The enzyme catalyses N(6)-[(R)-lipoyl]-L-lysyl-[glycine-cleavage complex H protein] + glycine + H(+) = N(6)-[(R)-S(8)-aminomethyldihydrolipoyl]-L-lysyl-[glycine-cleavage complex H protein] + CO2. The glycine cleavage system catalyzes the degradation of glycine. The P protein binds the alpha-amino group of glycine through its pyridoxal phosphate cofactor; CO(2) is released and the remaining methylamine moiety is then transferred to the lipoamide cofactor of the H protein. In Pyrococcus furiosus (strain ATCC 43587 / DSM 3638 / JCM 8422 / Vc1), this protein is Probable glycine dehydrogenase (decarboxylating) subunit 1.